A 451-amino-acid chain; its full sequence is UPF0210 protein NGO_1297 (451 aa).

Belongs to the UPF0210 family. Homodimer.

In Neisseria gonorrhoeae (strain ATCC 700825 / FA 1090), this protein is UPF0210 protein NGO_1297.